An 87-amino-acid polypeptide reads, in one-letter code: DNA-directed RNA polymerase subunit omega (87 aa).

Belongs to the RNA polymerase subunit omega family. As to quaternary structure, the RNAP catalytic core consists of 2 alpha, 1 beta, 1 beta' and 1 omega subunit. When a sigma factor is associated with the core the holoenzyme is formed, which can initiate transcription.

The enzyme catalyses RNA(n) + a ribonucleoside 5'-triphosphate = RNA(n+1) + diphosphate. Promotes RNA polymerase assembly. Latches the N- and C-terminal regions of the beta' subunit thereby facilitating its interaction with the beta and alpha subunits. The polypeptide is DNA-directed RNA polymerase subunit omega (Pseudomonas fluorescens (strain ATCC BAA-477 / NRRL B-23932 / Pf-5)).